The following is a 737-amino-acid chain: Polyribonucleotide nucleotidyltransferase (737 aa).

Residues Asp-489 and Asp-495 each contribute to the Mg(2+) site. The 60-residue stretch at Pro-556–Ile-615 folds into the KH domain. In terms of domain architecture, S1 motif spans Asp-625–Lys-693. The segment at Ser-691–Glu-737 is disordered. Positions Pro-700–Glu-737 are enriched in basic and acidic residues.

This sequence belongs to the polyribonucleotide nucleotidyltransferase family. It depends on Mg(2+) as a cofactor.

It localises to the cytoplasm. The catalysed reaction is RNA(n+1) + phosphate = RNA(n) + a ribonucleoside 5'-diphosphate. Functionally, involved in mRNA degradation. Catalyzes the phosphorolysis of single-stranded polyribonucleotides processively in the 3'- to 5'-direction. The protein is Polyribonucleotide nucleotidyltransferase of Streptococcus pneumoniae serotype 2 (strain D39 / NCTC 7466).